Reading from the N-terminus, the 104-residue chain is Large ribosomal subunit protein uL24 (104 aa).

The protein belongs to the universal ribosomal protein uL24 family. In terms of assembly, part of the 50S ribosomal subunit.

Functionally, one of two assembly initiator proteins, it binds directly to the 5'-end of the 23S rRNA, where it nucleates assembly of the 50S subunit. In terms of biological role, one of the proteins that surrounds the polypeptide exit tunnel on the outside of the subunit. In Salmonella paratyphi A (strain ATCC 9150 / SARB42), this protein is Large ribosomal subunit protein uL24.